Reading from the N-terminus, the 206-residue chain is Dephospho-CoA kinase (206 aa).

In terms of domain architecture, DPCK spans 4–200; the sequence is TVALTGGIGS…ASYLKLASQF (197 aa). ATP is bound at residue 12–17; it reads GSGKST.

It belongs to the CoaE family.

It is found in the cytoplasm. The enzyme catalyses 3'-dephospho-CoA + ATP = ADP + CoA + H(+). It functions in the pathway cofactor biosynthesis; coenzyme A biosynthesis; CoA from (R)-pantothenate: step 5/5. Catalyzes the phosphorylation of the 3'-hydroxyl group of dephosphocoenzyme A to form coenzyme A. This Salmonella choleraesuis (strain SC-B67) protein is Dephospho-CoA kinase.